Reading from the N-terminus, the 412-residue chain is Palmitoyl-acyl carrier protein thioesterase, chloroplastic (412 aa).

2 stretches are compositionally biased toward polar residues: residues 1–19 (MVATSATSSFFPVPSSSLD) and 27–40 (IGSTNLAGLNSAPN). Residues 1–49 (MVATSATSSFFPVPSSSLDPNGKGNKIGSTNLAGLNSAPNSGRMKVKPN) constitute a chloroplast transit peptide. The tract at residues 1 to 64 (MVATSATSSF…KINGKKVGLP (64 aa)) is disordered. Residues Asn315, His317, and Cys352 contribute to the active site.

Belongs to the acyl-ACP thioesterase family. As to expression, highly expressed in flowers. Expressed in roots, leaves, stems, siliques and seeds.

The protein resides in the plastid. The protein localises to the chloroplast. The enzyme catalyses hexadecanoyl-[ACP] + H2O = hexadecanoate + holo-[ACP] + H(+). In terms of biological role, plays an essential role in chain termination during de novo fatty acid synthesis. Possesses high thioesterase activity for palmitoyl-ACP versus other acyl-ACPs. Substrate preference is 16:0 &gt; 18:1 &gt; 18:0 &gt; 16:1. Plays an essential role in the supply of saturated fatty acids necessary for plant growth and seed development. Contributes to 16:0 production particularly in flowers. May be involved in the synthesis of long chain fatty acid. The protein is Palmitoyl-acyl carrier protein thioesterase, chloroplastic (FATB) of Arabidopsis thaliana (Mouse-ear cress).